Consider the following 453-residue polypeptide: Phosphoglucosamine mutase (453 aa).

Catalysis depends on serine 102, which acts as the Phosphoserine intermediate. Positions 102, 243, 245, and 247 each coordinate Mg(2+). The residue at position 102 (serine 102) is a Phosphoserine.

It belongs to the phosphohexose mutase family. Mg(2+) serves as cofactor. In terms of processing, activated by phosphorylation.

It carries out the reaction alpha-D-glucosamine 1-phosphate = D-glucosamine 6-phosphate. Its function is as follows. Catalyzes the conversion of glucosamine-6-phosphate to glucosamine-1-phosphate. In Bartonella tribocorum (strain CIP 105476 / IBS 506), this protein is Phosphoglucosamine mutase.